A 378-amino-acid polypeptide reads, in one-letter code: Plant intracellular Ras-group-related LRR protein 8 (378 aa).

A Ubiquitin-like domain is found at 10–86; it reads PTITVQVKFG…VMLMASQGLH (77 aa). A disordered region spans residues 85–120; the sequence is LHQGDGPITKNSSVPAPSTRRASNVKEAQIQKSDTN. A compositionally biased stretch (polar residues) spans 93–106; it reads TKNSSVPAPSTRRA. LRR repeat units lie at residues 129–152, 153–176, 178–201, 202–225, 226–250, 252–271, 272–293, 294–317, and 319–344; these read WKATGIIALSDSSLKAVPEEVWGC, GSSIRVLDVSNNCIEAIPQEIAAL, SLQKLILTANDIADGNISWEGLTC, VQTLTVLSLSQNRLVTLPSSLGSI, THLRELRIANNRLENLPVEIGLLKH, EILIANNNRITSLPSSIGGC, ESLNEVDLSSNLLAELPEAFGN, LQHLKALSVRNNGLTSLPSAFFIK, and SQLITLDLHGTEITNDVLRQVDGWEE.

It belongs to the SHOC2 family. As to expression, widely expressed except in panicles.

In terms of biological role, leucine-rich repeat protein that likely mediates protein interactions, possibly in the context of signal transduction. This is Plant intracellular Ras-group-related LRR protein 8 (IRL8) from Oryza sativa subsp. japonica (Rice).